We begin with the raw amino-acid sequence, 415 residues long: Serine hydroxymethyltransferase 2 (415 aa).

Residues L122 and 126–128 (GHL) contribute to the (6S)-5,6,7,8-tetrahydrofolate site. K230 is modified (N6-(pyridoxal phosphate)lysine).

It belongs to the SHMT family. As to quaternary structure, homodimer. It depends on pyridoxal 5'-phosphate as a cofactor.

Its subcellular location is the cytoplasm. The enzyme catalyses (6R)-5,10-methylene-5,6,7,8-tetrahydrofolate + glycine + H2O = (6S)-5,6,7,8-tetrahydrofolate + L-serine. The protein operates within one-carbon metabolism; tetrahydrofolate interconversion. Its pathway is amino-acid biosynthesis; glycine biosynthesis; glycine from L-serine: step 1/1. In terms of biological role, catalyzes the reversible interconversion of serine and glycine with tetrahydrofolate (THF) serving as the one-carbon carrier. This reaction serves as the major source of one-carbon groups required for the biosynthesis of purines, thymidylate, methionine, and other important biomolecules. Also exhibits THF-independent aldolase activity toward beta-hydroxyamino acids, producing glycine and aldehydes, via a retro-aldol mechanism. This is Serine hydroxymethyltransferase 2 from Burkholderia lata (strain ATCC 17760 / DSM 23089 / LMG 22485 / NCIMB 9086 / R18194 / 383).